Reading from the N-terminus, the 107-residue chain is Nucleoid-associated protein A1I_00660 (107 aa).

The disordered stretch occupies residues Lys-81–Phe-107.

The protein belongs to the YbaB/EbfC family. Homodimer.

It is found in the cytoplasm. The protein resides in the nucleoid. In terms of biological role, binds to DNA and alters its conformation. May be involved in regulation of gene expression, nucleoid organization and DNA protection. This Rickettsia bellii (strain OSU 85-389) protein is Nucleoid-associated protein A1I_00660.